Here is a 661-residue protein sequence, read N- to C-terminus: Arginine--tRNA ligase, cytoplasmic (661 aa).

The could be involved in the assembly of the multisynthetase complex stretch occupies residues 1–72 (MEARVAEAAA…QEEQSKTVKS (72 aa)). L-arginine-binding positions include 201 to 203 (SPN), His212, Tyr385, Asp389, and Gln413. A 'HIGH' region motif is present at residues 202–213 (PNIAKEMHVGHL). The interaction with tRNA stretch occupies residues 530–544 (NTAAYLLYAFTRIRA).

It belongs to the class-I aminoacyl-tRNA synthetase family. Monomer; also part of a multisubunit complex that groups tRNA ligases for Arg, Asp, Glu, Gln, Ile, Leu, Lys, Met and Pro.

Its subcellular location is the cytoplasm. It localises to the cytosol. The catalysed reaction is tRNA(Arg) + L-arginine + ATP = L-arginyl-tRNA(Arg) + AMP + diphosphate. Its function is as follows. Forms part of a macromolecular complex that catalyzes the attachment of specific amino acids to cognate tRNAs during protein synthesis. This is Arginine--tRNA ligase, cytoplasmic (RARS1) from Gallus gallus (Chicken).